The chain runs to 1227 residues: Methionine synthase (1227 aa).

Residues 2–325 form the Hcy-binding domain; it reads SSKVEQLRAQ…QHIAAMSRAV (324 aa). The Zn(2+) site is built by C247, C310, and C311. The Pterin-binding domain occupies 356–617; that stretch reads FVNVGERTNV…LPAELRDAVE (262 aa). In terms of domain architecture, B12-binding N-terminal spans 650 to 744; sequence QQAEWRSWEV…FIEASKEQGK (95 aa). Residues E694, 756 to 760, H759, S804, T808, and A860 contribute to the methylcob(III)alamin site; that span reads GDVHD. The B12-binding domain occupies 746 to 881; it reads NGKMVIATVK…SDTQRDDFVA (136 aa). An AdoMet activation domain is found at 897-1227; the sequence is KKPRTPPVTL…LAPNLGYDAD (331 aa). S-adenosyl-L-methionine contacts are provided by residues D946, R1134, and 1189–1190; that span reads YY.

This sequence belongs to the vitamin-B12 dependent methionine synthase family. Requires methylcob(III)alamin as cofactor. It depends on Zn(2+) as a cofactor.

It carries out the reaction (6S)-5-methyl-5,6,7,8-tetrahydrofolate + L-homocysteine = (6S)-5,6,7,8-tetrahydrofolate + L-methionine. The protein operates within amino-acid biosynthesis; L-methionine biosynthesis via de novo pathway; L-methionine from L-homocysteine (MetH route): step 1/1. Its function is as follows. Catalyzes the transfer of a methyl group from methyl-cobalamin to homocysteine, yielding enzyme-bound cob(I)alamin and methionine. Subsequently, remethylates the cofactor using methyltetrahydrofolate. The polypeptide is Methionine synthase (metH) (Escherichia coli (strain K12)).